A 235-amino-acid polypeptide reads, in one-letter code: Ubiquinone/menaquinone biosynthesis C-methyltransferase UbiE (235 aa).

T59, D84, and S123 together coordinate S-adenosyl-L-methionine.

This sequence belongs to the class I-like SAM-binding methyltransferase superfamily. MenG/UbiE family.

The catalysed reaction is a 2-demethylmenaquinol + S-adenosyl-L-methionine = a menaquinol + S-adenosyl-L-homocysteine + H(+). It catalyses the reaction a 2-methoxy-6-(all-trans-polyprenyl)benzene-1,4-diol + S-adenosyl-L-methionine = a 5-methoxy-2-methyl-3-(all-trans-polyprenyl)benzene-1,4-diol + S-adenosyl-L-homocysteine + H(+). Its pathway is quinol/quinone metabolism; menaquinone biosynthesis; menaquinol from 1,4-dihydroxy-2-naphthoate: step 2/2. The protein operates within cofactor biosynthesis; ubiquinone biosynthesis. Its function is as follows. Methyltransferase required for the conversion of demethylmenaquinol (DMKH2) to menaquinol (MKH2) and the conversion of 2-polyprenyl-6-methoxy-1,4-benzoquinol (DDMQH2) to 2-polyprenyl-3-methyl-6-methoxy-1,4-benzoquinol (DMQH2). This is Ubiquinone/menaquinone biosynthesis C-methyltransferase UbiE from Campylobacter jejuni subsp. jejuni serotype O:6 (strain 81116 / NCTC 11828).